Here is a 429-residue protein sequence, read N- to C-terminus: Adenylosuccinate synthetase (429 aa).

GTP contacts are provided by residues 12–18 (GDEGKGK) and 40–42 (GHT). Asp-13 (proton acceptor) is an active-site residue. Mg(2+) contacts are provided by Asp-13 and Gly-40. Residues 13 to 16 (DEGK), 38 to 41 (NAGH), Thr-129, Arg-143, Gln-224, Thr-239, and Arg-303 each bind IMP. Catalysis depends on His-41, which acts as the Proton donor. Residue 299–305 (ATTGRKR) participates in substrate binding. GTP-binding positions include Arg-305, 331-333 (KLD), and 413-415 (SVG).

Belongs to the adenylosuccinate synthetase family. In terms of assembly, homodimer. Requires Mg(2+) as cofactor.

It is found in the cytoplasm. It carries out the reaction IMP + L-aspartate + GTP = N(6)-(1,2-dicarboxyethyl)-AMP + GDP + phosphate + 2 H(+). It functions in the pathway purine metabolism; AMP biosynthesis via de novo pathway; AMP from IMP: step 1/2. In terms of biological role, plays an important role in the de novo pathway of purine nucleotide biosynthesis. Catalyzes the first committed step in the biosynthesis of AMP from IMP. In Desulfosudis oleivorans (strain DSM 6200 / JCM 39069 / Hxd3) (Desulfococcus oleovorans), this protein is Adenylosuccinate synthetase.